Here is a 253-residue protein sequence, read N- to C-terminus: Imidazole glycerol phosphate synthase subunit HisF (253 aa).

Residues D11 and D130 contribute to the active site.

The protein belongs to the HisA/HisF family. In terms of assembly, heterodimer of HisH and HisF.

It is found in the cytoplasm. It carries out the reaction 5-[(5-phospho-1-deoxy-D-ribulos-1-ylimino)methylamino]-1-(5-phospho-beta-D-ribosyl)imidazole-4-carboxamide + L-glutamine = D-erythro-1-(imidazol-4-yl)glycerol 3-phosphate + 5-amino-1-(5-phospho-beta-D-ribosyl)imidazole-4-carboxamide + L-glutamate + H(+). Its pathway is amino-acid biosynthesis; L-histidine biosynthesis; L-histidine from 5-phospho-alpha-D-ribose 1-diphosphate: step 5/9. In terms of biological role, IGPS catalyzes the conversion of PRFAR and glutamine to IGP, AICAR and glutamate. The HisF subunit catalyzes the cyclization activity that produces IGP and AICAR from PRFAR using the ammonia provided by the HisH subunit. The polypeptide is Imidazole glycerol phosphate synthase subunit HisF (Dehalococcoides mccartyi (strain ATCC BAA-2266 / KCTC 15142 / 195) (Dehalococcoides ethenogenes (strain 195))).